Here is a 193-residue protein sequence, read N- to C-terminus: CASP-like protein 2D1 (193 aa).

The interval 1–24 (MRANNNNTREEERSSSSKQQQPQA) is disordered. At 1-29 (MRANNNNTREEERSSSSKQQQPQAHMSLK) the chain is on the cytoplasmic side. The chain crosses the membrane as a helical span at residues 30–50 (IIDSCLRLSVVPLSVATIWLT). At 51-73 (VTNHESNPDYGNLDYNSIMGLKY) the chain is on the extracellular side. Residues 74–94 (MVGVSAISAIYALLSTISLWV) form a helical membrane-spanning segment. At 95 to 109 (TCLVSKAWLFFVPDQ) the chain is on the cytoplasmic side. The chain crosses the membrane as a helical span at residues 110–132 (VLAYVMTTSVAGATEIVYLLNKG). The Extracellular segment spans residues 133-151 (DKIVTWSEMCSSYPHYCSK). The helical transmembrane segment at 152–172 (LTIALGLHVFVLFFFLFLSVI) threads the bilayer. Topologically, residues 173–193 (SAYRAFSPFDPPCDSQTNIDA) are cytoplasmic.

Belongs to the Casparian strip membrane proteins (CASP) family. In terms of assembly, homodimer and heterodimers.

Its subcellular location is the cell membrane. The chain is CASP-like protein 2D1 from Arabidopsis lyrata subsp. lyrata (Lyre-leaved rock-cress).